The following is a 289-amino-acid chain: Rhodopsin (289 aa).

Residues 1 to 7 (YLVNPAA) lie on the Extracellular side of the membrane. A helical transmembrane segment spans residues 8–32 (YAALGAYMFLLILIGFPINFLTLYV). At 33–44 (TLEHKKLRTPLN) the chain is on the cytoplasmic side. Residues 45 to 67 (YILLNLAVGNLFMVLGGFTTTMY) traverse the membrane as a helical segment. The Extracellular portion of the chain corresponds to 68-81 (TSMHGYFVLGRLGC). A disulfide bridge links cysteine 81 with cysteine 158. The helical transmembrane segment at 82–104 (NLEGFFATLGGEIALWSLVVLAI) threads the bilayer. Residues 105–107 (ERW) carry the 'Ionic lock' involved in activated form stabilization motif. The Cytoplasmic segment spans residues 105-123 (ERWIVVCKPISKFRFTEDH). The chain crosses the membrane as a helical span at residues 124–144 (AIMGLAFSWVMGLACAVPPLV). Topologically, residues 145-173 (GWSRYIPEGMKCSCGVDYYTRAEGFNNES) are extracellular. Asparagine 171 is a glycosylation site (N-linked (GlcNAc...) asparagine). A helical transmembrane segment spans residues 174 to 195 (FVIYMFIVHFLIPLSVIFFCYG). Over 196–223 (RLLCAVKEAAAAQQESETTQRAEKEVSR) the chain is Cytoplasmic. A helical membrane pass occupies residues 224-245 (MVVIMVIGFLVCWLPYASVAWW). The Extracellular portion of the chain corresponds to 246–257 (IFCNQGSDFGPI). Residues 258 to 279 (FMTLPSFFAKRPAIYNPMIYIC) traverse the membrane as a helical segment. Lysine 267 carries the N6-(retinylidene)lysine modification. Residues 280–289 (MNKQFRHCMI) lie on the Cytoplasmic side of the membrane.

It belongs to the G-protein coupled receptor 1 family. Opsin subfamily. In terms of processing, phosphorylated on some or all of the serine and threonine residues present in the C-terminal region. Post-translationally, contains one covalently linked retinal chromophore.

It localises to the membrane. The protein resides in the cell projection. It is found in the cilium. Its subcellular location is the photoreceptor outer segment. Photoreceptor required for image-forming vision at low light intensity. While most salt water fish species use retinal as chromophore, most freshwater fish use 3-dehydroretinal, or a mixture of retinal and 3-dehydroretinal. Light-induced isomerization of 11-cis to all-trans retinal triggers a conformational change that activates signaling via G-proteins. Subsequent receptor phosphorylation mediates displacement of the bound G-protein alpha subunit by arrestin and terminates signaling. The sequence is that of Rhodopsin (rho) from Cottinella boulengeri (Short-headed sculpin).